The sequence spans 168 residues: Photosystem I assembly protein Ycf3 (168 aa).

3 TPR repeats span residues 35 to 68, 72 to 105, and 120 to 153; these read AFTY…EIDP, SYIL…NPFL, and GEQA…TPGN.

It belongs to the Ycf3 family.

Its subcellular location is the plastid. It is found in the chloroplast thylakoid membrane. Essential for the assembly of the photosystem I (PSI) complex. May act as a chaperone-like factor to guide the assembly of the PSI subunits. The chain is Photosystem I assembly protein Ycf3 from Nandina domestica (Heavenly bamboo).